The following is a 198-amino-acid chain: Sorcin (198 aa).

EF-hand domains lie at 45–64 (QDGQIDADELQRCLTQSGIA), 70–98 (FNLETCRLMVSMLDRDMSGTMGFNEFKEL), 100–135 (AVLNGWRQHFISFDSDRSGTVDPQELQKALTTMGFR), and 151–169 (SGKITFDDYIACCVKLRAL). Residues D83, D85, S87, T89, E94, D113, D115, S117, T119, and E124 each coordinate Ca(2+). S178 carries the post-translational modification Phosphoserine.

Homodimer. Interacts with GCA, RYR2 and ANXA7. Detected in cardiac myocytes.

Its subcellular location is the cytoplasm. It localises to the sarcoplasmic reticulum membrane. Calcium-binding protein that modulates excitation-contraction coupling in the heart. Contributes to calcium homeostasis in the heart sarcoplasmic reticulum. Modulates the activity of RYR2 calcium channels. This is Sorcin (Sri) from Mus musculus (Mouse).